Consider the following 45-residue polypeptide: Cytochrome b559 subunit beta (45 aa).

Thr-2 carries the N-acetylthreonine modification. Over 2–17 (TSNTPNQEPVSYPIFT) the chain is Cytoplasmic. A helical transmembrane segment spans residues 18 to 42 (VRWVAVHTLAVPTIFFLGAIAAMQF). Residue His-24 coordinates heme. The Lumenal segment spans residues 43–45 (IQR).

As to quaternary structure, heterodimer of an alpha subunit and a beta subunit. PSII is composed of 1 copy each of membrane proteins PsbA, PsbB, PsbC, PsbD, PsbE, PsbF, PsbH, PsbI, PsbJ, PsbK, PsbL, PsbM, PsbT, PsbX, PsbY, PsbZ, Psb30/Ycf12, peripheral proteins PsbO, CyanoQ (PsbQ), PsbU, PsbV and a large number of cofactors. It forms dimeric complexes. Part of a photosystem II (PSII) assembly intermediate complex PSII-I; crystallized from a strain deleted of psbJ, it forms monomeric PSII before addition of the oxygen evolving complex. PSII-I includes 3 assembly factors not found in mature PSII (Psb27, Psb28 and Psb34). Heme b serves as cofactor.

It localises to the cellular thylakoid membrane. This b-type cytochrome is tightly associated with the reaction center of photosystem II (PSII). PSII is a light-driven water:plastoquinone oxidoreductase that uses light energy to abstract electrons from H(2)O, generating O(2) and a proton gradient subsequently used for ATP formation. It consists of a core antenna complex that captures photons, and an electron transfer chain that converts photonic excitation into a charge separation. The polypeptide is Cytochrome b559 subunit beta (Thermosynechococcus vestitus (strain NIES-2133 / IAM M-273 / BP-1)).